A 499-amino-acid polypeptide reads, in one-letter code: Lysosomal Pro-X carboxypeptidase (499 aa).

Residues Met1–Ala21 form the signal peptide. Residues Asn22–Thr47 constitute a propeptide that is removed on maturation. An N-linked (GlcNAc...) asparagine glycan is attached at Asn103. Residue Ser181 is the Charge relay system of the active site. The segment at His196–Tyr337 is SKS domain. 4 disulfide bridges follow: Cys217–Cys375, Cys235–Cys313, Cys266–Cys346, and Cys367–Cys397. Asn234 is a glycosylation site (N-linked (GlcNAc...) asparagine). Asn339 and Asn348 each carry an N-linked (GlcNAc...) asparagine glycan. Asn418 is a glycosylation site (N-linked (GlcNAc...) asparagine). Residues Asp433 and His458 each act as charge relay system in the active site.

This sequence belongs to the peptidase S28 family. As to quaternary structure, homodimer.

It localises to the lysosome. It carries out the reaction Cleavage of a -Pro-|-Xaa bond to release a C-terminal amino acid.. In terms of biological role, cleaves C-terminal amino acids linked to proline in peptides such as angiotensin II, III and des-Arg9-bradykinin. This cleavage occurs at acidic pH, but enzymatic activity is retained with some substrates at neutral pH. The protein is Lysosomal Pro-X carboxypeptidase (PRCP) of Bos taurus (Bovine).